Consider the following 642-residue polypeptide: 2-oxoacid:ferredoxin oxidoreductase 2, subunit alpha (642 aa).

The short motif at 263–267 is the YPITP motif element; that stretch reads YPITP. 2 residues coordinate substrate: threonine 266 and arginine 356.

In terms of assembly, heterodimer composed of an alpha and a beta subunit.

It catalyses the reaction a 2-oxocarboxylate + 2 oxidized [2Fe-2S]-[ferredoxin] + CoA = an acyl-CoA + 2 reduced [2Fe-2S]-[ferredoxin] + CO2 + H(+). Functionally, catalyzes the coenzyme A-dependent oxidative decarboxylation of different 2-oxoacids such as pyruvate, 2-oxobutyrate, glyoxylate and 2-oxoglutarate to form their CoA derivatives. In Aeropyrum pernix (strain ATCC 700893 / DSM 11879 / JCM 9820 / NBRC 100138 / K1), this protein is 2-oxoacid:ferredoxin oxidoreductase 2, subunit alpha.